The sequence spans 407 residues: Argininosuccinate synthase (407 aa).

ATP-binding positions include 16-24 (AYSGGLDTS) and alanine 44. The L-citrulline site is built by tyrosine 96 and serine 101. Glycine 126 serves as a coordination point for ATP. L-aspartate-binding residues include threonine 128, asparagine 132, and aspartate 133. L-citrulline is bound at residue asparagine 132. Arginine 136, serine 185, serine 194, glutamate 270, and tyrosine 282 together coordinate L-citrulline.

The protein belongs to the argininosuccinate synthase family. Type 1 subfamily. Homotetramer.

Its subcellular location is the cytoplasm. The catalysed reaction is L-citrulline + L-aspartate + ATP = 2-(N(omega)-L-arginino)succinate + AMP + diphosphate + H(+). The protein operates within amino-acid biosynthesis; L-arginine biosynthesis; L-arginine from L-ornithine and carbamoyl phosphate: step 2/3. This is Argininosuccinate synthase from Shewanella loihica (strain ATCC BAA-1088 / PV-4).